The primary structure comprises 94 residues: MNSKLTALIFLGLIAIAYCGWINEEKIQKKIDERMGNTVLGGMAKAIVHKMAKNEFQCMANMDMLGNCEKHCQTSGEKGYCHGTKCKCGTPLSY.

A signal peptide spans 1–19 (MNSKLTALIFLGLIAIAYC). Positions 55 to 94 (EFQCMANMDMLGNCEKHCQTSGEKGYCHGTKCKCGTPLSY) constitute a BetaSPN-type CS-alpha/beta domain. Cystine bridges form between Cys-58-Cys-81, Cys-68-Cys-86, and Cys-72-Cys-88.

Belongs to the long chain scorpion toxin family. Class 3 subfamily. As to expression, expressed by the venom gland.

The protein resides in the secreted. It is found in the target cell membrane. Its function is as follows. This full-length protein shows antibacterial activity against B.subtilis and K.pneumoniae. Also shows a potent inhibitory effect on the ookinete (ED(50) 0.7 uM) and gamete (ED(50) 10 uM) stages of Plasmodium berghei development. In addition, induces cell membrane disruption, leakage currents and cell death on HEK293 cell line (tested at 25 uM). This chain is Scorpine, found in Pandinus imperator (Emperor scorpion).